Consider the following 279-residue polypeptide: Shikimate dehydrogenase (NADP(+)) (279 aa).

Shikimate-binding positions include 20-22 (SRS) and Thr67. Residue Lys71 is the Proton acceptor of the active site. Asp83 is an NADP(+) binding site. Residues Asn92 and Asp108 each contribute to the shikimate site. NADP(+) contacts are provided by residues 134–138 (GAGGA) and Leu223. Position 225 (Tyr225) interacts with shikimate. Gly246 is an NADP(+) binding site.

It belongs to the shikimate dehydrogenase family. In terms of assembly, homodimer.

The enzyme catalyses shikimate + NADP(+) = 3-dehydroshikimate + NADPH + H(+). It participates in metabolic intermediate biosynthesis; chorismate biosynthesis; chorismate from D-erythrose 4-phosphate and phosphoenolpyruvate: step 4/7. Its function is as follows. Involved in the biosynthesis of the chorismate, which leads to the biosynthesis of aromatic amino acids. Catalyzes the reversible NADPH linked reduction of 3-dehydroshikimate (DHSA) to yield shikimate (SA). This chain is Shikimate dehydrogenase (NADP(+)), found in Cereibacter sphaeroides (strain ATCC 17025 / ATH 2.4.3) (Rhodobacter sphaeroides).